A 240-amino-acid polypeptide reads, in one-letter code: Mediator of RNA polymerase II transcription subunit 19 (240 aa).

Disordered regions lie at residues 32–58 (GKTQAQTPIPGPPPTLPSSSSVEDNSR) and 169–240 (QPPK…SGLR). Composition is skewed to basic residues over residues 170 to 181 (PPKKKNKKHKQS) and 212 to 224 (RKKKKDKKKKKSR).

Belongs to the Mediator complex subunit 19 family. Component of the Mediator complex.

The protein localises to the nucleus. Component of the Mediator complex, a coactivator involved in the regulated transcription of nearly all RNA polymerase II-dependent genes. Mediator functions as a bridge to convey information from gene-specific regulatory proteins to the basal RNA polymerase II transcription machinery. Mediator is recruited to promoters by direct interactions with regulatory proteins and serves as a scaffold for the assembly of a functional preinitiation complex with RNA polymerase II and the general transcription factors. The protein is Mediator of RNA polymerase II transcription subunit 19 (med19) of Xenopus laevis (African clawed frog).